The primary structure comprises 1040 residues: Multidrug resistance protein MdtB (1040 aa).

The next 12 membrane-spanning stretches (helical) occupy residues 16–36, 347–367, 369–389, 396–416, 440–460, 472–492, 537–557, 863–883, 888–908, 911–931, 968–988, and 998–1018; these read FIMR…AGII, LMMA…NIPA, IIPG…MVFL, LTLM…IVVI, IGFT…PLLF, FAIT…TLTP, WLTL…WVFI, LGST…VLGI, FIHP…ALLA, IAGS…IGIV, ILMT…STGV, and IGMV…TPVI.

The protein belongs to the resistance-nodulation-cell division (RND) (TC 2.A.6) family. MdtB subfamily. As to quaternary structure, part of a tripartite efflux system composed of MdtA, MdtB and MdtC. MdtB forms a heteromultimer with MdtC.

The protein localises to the cell inner membrane. Functionally, the MdtABC tripartite complex confers resistance against novobiocin and deoxycholate. This chain is Multidrug resistance protein MdtB, found in Escherichia coli O8 (strain IAI1).